A 719-amino-acid polypeptide reads, in one-letter code: Polyribonucleotide nucleotidyltransferase (719 aa).

Asp507 and Asp513 together coordinate Mg(2+). The KH domain occupies 573-633; that stretch reads PKLELFSVDP…EQIKAAKDYI (61 aa). An S1 motif domain is found at 658–719; it reads GQEFQGIVKK…NGKISVDLCE (62 aa).

It belongs to the polyribonucleotide nucleotidyltransferase family. Requires Mg(2+) as cofactor.

The protein resides in the cytoplasm. The catalysed reaction is RNA(n+1) + phosphate = RNA(n) + a ribonucleoside 5'-diphosphate. Involved in mRNA degradation. Catalyzes the phosphorolysis of single-stranded polyribonucleotides processively in the 3'- to 5'-direction. This is Polyribonucleotide nucleotidyltransferase from Campylobacter jejuni (strain RM1221).